The following is a 389-amino-acid chain: MSLPTNQLRLAMVAGEPSGDLLAASLLGGLQERLPASTRYYGIGGQRMLAHGFDSHWQMDKLTVRGYVEALGQIPEILRIRGELKRQLLAERPDAFIGVDAPDFNFSVEQAARDAGIPSIHFVCPSIWAWRGGRIKKIAKSVDHMLCLFPFEPAILDKAGVASTYVGHPLADEIPLEPDTHGARIALGLPADGPVIAVLPGSRRSEIGLIGPTFFAAMALMQQREPGVRFVMPAATPALRELLQPLVDAHPQLALTITDGRSQVAMTAADAILVKSGTVTLEAALLKKPMVISYKVPWLTGQIMRRQGYLPYVGLPNILAGRFVVPELLQHFATPEALADATLTQLRDDANRRTLTEVFTEMHLSLRQNTAAKAAEAVVRVLDQRRGRA.

Belongs to the LpxB family.

The enzyme catalyses a lipid X + a UDP-2-N,3-O-bis[(3R)-3-hydroxyacyl]-alpha-D-glucosamine = a lipid A disaccharide + UDP + H(+). It functions in the pathway bacterial outer membrane biogenesis; LPS lipid A biosynthesis. Condensation of UDP-2,3-diacylglucosamine and 2,3-diacylglucosamine-1-phosphate to form lipid A disaccharide, a precursor of lipid A, a phosphorylated glycolipid that anchors the lipopolysaccharide to the outer membrane of the cell. The polypeptide is Lipid-A-disaccharide synthase (Burkholderia ambifaria (strain MC40-6)).